A 636-amino-acid polypeptide reads, in one-letter code: Topoisomerase I damage affected protein 7 (636 aa).

Over residues 1–18 (MNSNSTIGRTTLGESDTI) the composition is skewed to polar residues. Disordered regions lie at residues 1–33 (MNSN…NSRS), 87–109 (TLVS…QYDP), 246–271 (NKDT…SSTN), 299–326 (PTSS…DDTT), and 339–362 (QSTT…STSP). An N-linked (GlcNAc...) asparagine glycan is attached at Asn4. Low complexity-rich tracts occupy residues 19–33 (SLSF…NSRS) and 87–108 (TLVS…SQYD). Asn257 carries N-linked (GlcNAc...) asparagine glycosylation. A helical transmembrane segment spans residues 457-477 (IVGSVVGSVGGILICVLVVWF). Asn492 carries an N-linked (GlcNAc...) asparagine glycan. The segment covering 510-541 (QAKEASLQAQDSGSQQRNTETASANNPFSNEF) has biased composition (polar residues). A disordered region spans residues 510–551 (QAKEASLQAQDSGSQQRNTETASANNPFSNEFNFKARGNPPP). A Glycyl lysine isopeptide (Lys-Gly) (interchain with G-Cter in ubiquitin) cross-link involves residue Lys512. N-linked (GlcNAc...) asparagine glycans are attached at residues Asn557, Asn562, and Asn626. Ser628 bears the Phosphoserine mark.

The protein belongs to the TDA7 family.

The protein localises to the vacuole membrane. This is Topoisomerase I damage affected protein 7 (TDA7) from Saccharomyces cerevisiae (strain ATCC 204508 / S288c) (Baker's yeast).